Reading from the N-terminus, the 1214-residue chain is Delta-latroinsectotoxin-Lt1a (1214 aa).

Residues 64-89 (IGSIPVIGEVVGIVTAPIAIVSHITS) form a helix H2 is the probable transmembrane region of the tetrameric pore inserted in the target cell membrane region. Residues 250-269 (ALYALFYGTQTYAAVMFFLL) are helix H8 is the probable transmembrane region of the tetrameric pore inserted in the target cell membrane. 15 ANK repeats span residues 464–497 (DIHR…DIEA), 501–532 (NDRS…DIEL), 536–565 (NGFT…DVNA), 570–600 (TNLT…KVNE), 604–633 (DGFT…DKNA), 637–666 (SGLT…DLNI), 670–699 (NHMA…KVSI), 706–734 (NNWT…DINL), 740–769 (GNLT…NIEE), 773–802 (EGYT…DIEA), 806–835 (DNLT…DIGA), 839–868 (DGST…NLKE), 872–901 (NKYL…SLKD), 906–936 (EGRT…TLDE), and 966–994 (VKPT…PEGS). The propeptide at 1020–1214 (IVKETNSRYL…IDVHQKMFLR (195 aa)) is C-terminal domain cleavage is required for toxin activation.

Belongs to the cationic peptide 01 (latrotoxin) family. 04 (delta-latroinsectotoxin) subfamily. In terms of assembly, homotetramer in membrane. Expressed by the venom gland.

The protein resides in the secreted. It is found in the target cell membrane. Its function is as follows. Insecticidal presynaptic neurotoxin that induces massive neurotransmitter release at insect (but not vertebrate) neuromuscular junctions. Native toxin forms cation-permeable pores (with high permeability to calcium) in lipid membranes locust muscle membrane and artificial lipid bilayers. May bind to insect neurexin-1 homolog, insect adhesion G protein-coupled receptor L1 homolog, and insect receptor-type tyrosine-protein phosphatase S homolog, and induces neurotransmitter exocytosis both by forming tetrameric pores in membranes and signaling via G protein-coupled receptor. Oligomerization is a process independent of divalent cations. In Latrodectus tredecimguttatus (Mediterranean black widow spider), this protein is Delta-latroinsectotoxin-Lt1a.